The sequence spans 176 residues: Shikimate kinase (176 aa).

An ATP-binding site is contributed by 14–19 (GAGKST). S18 provides a ligand contact to Mg(2+). Substrate contacts are provided by D36, R60, and G83. Residue R121 participates in ATP binding. R140 lines the substrate pocket.

Belongs to the shikimate kinase family. In terms of assembly, monomer. Mg(2+) serves as cofactor.

It is found in the cytoplasm. The catalysed reaction is shikimate + ATP = 3-phosphoshikimate + ADP + H(+). It functions in the pathway metabolic intermediate biosynthesis; chorismate biosynthesis; chorismate from D-erythrose 4-phosphate and phosphoenolpyruvate: step 5/7. In terms of biological role, catalyzes the specific phosphorylation of the 3-hydroxyl group of shikimic acid using ATP as a cosubstrate. In Francisella tularensis subsp. holarctica (strain FTNF002-00 / FTA), this protein is Shikimate kinase.